Here is a 64-residue protein sequence, read N- to C-terminus: Prokaryotic ubiquitin-like protein Pup (64 aa).

A compositionally biased stretch (basic and acidic residues) spans M1–G11. The interval M1–D38 is disordered. The segment at D21 to Y58 is ARC ATPase binding. Residues A24–E52 are a coiled coil. Deamidated glutamine is present on Q64. Q64 is covalently cross-linked (Isoglutamyl lysine isopeptide (Gln-Lys) (interchain with K-? in acceptor proteins)).

It belongs to the prokaryotic ubiquitin-like protein family. Strongly interacts with the proteasome-associated ATPase ARC through a hydrophobic interface; the interacting region of Pup lies in its C-terminal half. There is one Pup binding site per ARC hexamer ring. Post-translationally, is modified by deamidation of its C-terminal glutamine to glutamate by the deamidase Dop, a prerequisite to the subsequent pupylation process.

It functions in the pathway protein degradation; proteasomal Pup-dependent pathway. Functionally, protein modifier that is covalently attached to lysine residues of substrate proteins, thereby targeting them for proteasomal degradation. The tagging system is termed pupylation. This Rhodococcus opacus (strain B4) protein is Prokaryotic ubiquitin-like protein Pup.